We begin with the raw amino-acid sequence, 54 residues long: Photoreceptor disk component PRCD (54 aa).

C2 carries S-palmitoyl cysteine lipidation. Residues 24–54 are disordered; it reads QPEPSGADGAVVGSRSERDLQSSGRKEEPLK. Over residues 38-54 the composition is skewed to basic and acidic residues; that stretch reads RSERDLQSSGRKEEPLK.

This sequence belongs to the PRCD family. In terms of assembly, interacts with RHO/rhodopsin; the interaction promotes PRCD stability. In terms of processing, palmitoylated at Cys-2. Palmitoylation is essential for protein stability and trafficking to the photoreceptor outer segment, but does not appear to be essential for membrane localization. Probably palmitoylated by ZDHHC3. Post-translationally, phosphorylated. As to expression, expressed in retina.

The protein resides in the cell projection. Its subcellular location is the cilium. It is found in the photoreceptor outer segment. The protein localises to the membrane. It localises to the endoplasmic reticulum. The protein resides in the golgi apparatus. Its function is as follows. Involved in vision. This chain is Photoreceptor disk component PRCD, found in Canis lupus familiaris (Dog).